The chain runs to 253 residues: MRILLSNDDGVHAPGIQTLAKALREFADVQVVAPDRNRSGASNSLTLESSLRTFTFENGDIAVQMGTPTDCVYLGVNALMRPRPDIVVSGINAGPNLGDDVIYSGTVAAAMEGRHLGFPALAVSLDGHKHYDTAAAVTCSILRALCKEPLRTGRILNINVQDLPLDQIKGIRVTRCGTRHPADQVIPQQDPRGNTLYWIGPPGGKCDAGPGTDFAAVDEGYVSITPLHVDLTAHSAQDVVSDWLNSVGVGTQW.

A divalent metal cation-binding residues include D8, D9, S39, and N92.

This sequence belongs to the SurE nucleotidase family. The cofactor is a divalent metal cation.

It localises to the cytoplasm. It carries out the reaction a ribonucleoside 5'-phosphate + H2O = a ribonucleoside + phosphate. The catalysed reaction is a ribonucleoside 3'-phosphate + H2O = a ribonucleoside + phosphate. The enzyme catalyses [phosphate](n) + H2O = [phosphate](n-1) + phosphate + H(+). Its function is as follows. Nucleotidase with a broad substrate specificity as it can dephosphorylate various ribo- and deoxyribonucleoside 5'-monophosphates and ribonucleoside 3'-monophosphates with highest affinity to 3'-AMP. Also hydrolyzes polyphosphate (exopolyphosphatase activity) with the preference for short-chain-length substrates (P20-25). Might be involved in the regulation of dNTP and NTP pools, and in the turnover of 3'-mononucleotides produced by numerous intracellular RNases (T1, T2, and F) during the degradation of various RNAs. In Shigella flexneri serotype 5b (strain 8401), this protein is 5'/3'-nucleotidase SurE.